The chain runs to 502 residues: Lysine--tRNA ligase (502 aa).

Residues Glu412 and Glu419 each coordinate Mg(2+).

The protein belongs to the class-II aminoacyl-tRNA synthetase family. In terms of assembly, homodimer. Requires Mg(2+) as cofactor.

Its subcellular location is the cytoplasm. It catalyses the reaction tRNA(Lys) + L-lysine + ATP = L-lysyl-tRNA(Lys) + AMP + diphosphate. This chain is Lysine--tRNA ligase, found in Buchnera aphidicola subsp. Cinara cedri (strain Cc).